The primary structure comprises 279 residues: Movement protein (279 aa).

This sequence belongs to the cucumovirus movement protein family.

The protein resides in the host cell junction. It localises to the host plasmodesma. In terms of biological role, transports viral genome to neighboring plant cells directly through plasmosdesmata, without any budding. The movement protein allows efficient cell to cell propagation, by bypassing the host cell wall barrier. Acts by forming a tubular structure at the host plasmodesmata, enlarging it enough to allow free passage of virion capsids. This is Movement protein from Cucumber mosaic virus (strain As) (CMV).